A 130-amino-acid polypeptide reads, in one-letter code: Small ribosomal subunit protein uS8 (130 aa).

This sequence belongs to the universal ribosomal protein uS8 family. In terms of assembly, part of the 30S ribosomal subunit.

Its function is as follows. One of the primary rRNA binding proteins, it binds directly to 16S rRNA central domain where it helps coordinate assembly of the platform of the 30S subunit. This is Small ribosomal subunit protein uS8 from Methanosphaerula palustris (strain ATCC BAA-1556 / DSM 19958 / E1-9c).